Consider the following 480-residue polypeptide: MSLLTSYEGLRHQIERLVRENEELKKLVRLIRENQELKSAIKTQAGGLCISGFTGGLGEAAAGPPQHQGVFLPPASAAAKEPCSEDLGMVALAPLADMLNTPQLSPAAGSLVNPLAATLNPLLSGQIPLLQNNQFANLVPCSMSNQLTNPTTVSPGVTLASSLGLPSTGPLNSQMTSPMTVPPGTTLASSLGLTSTGSLTTSSRLVGPLAVSQSSPIMAPLAGTVAVSLSSPLLSSTATPLGVAQNVVPNPINNIGQPETPRVRRAEPTRGNFSGTSAYAGPAPTSKVNDTRGSRVMEQSRKNVVEMERKTPHRKSNKLPDNPRDTKQLVCERLVGEIAFQLDRRILSSIFPERVRLYGFTVSNIPEKIIQASLNPSNHKLDEDLCQTLTQRYVSIMNKLQSLGYNGRVHPALTEQLVNEYGILRERPELAASEGGCYTVDFLQRVLLETVHPSKLTDALLLLSCLHQLSHDDGKPMFIW.

Residues methionine 1 to serine 76 form a necessary for targeting to centrosomes region. Positions serine 2–alanine 45 form a coiled coil. Disordered stretches follow at residues isoleucine 252–methionine 297 and valine 305–arginine 324.

It belongs to the speriolin family. In terms of assembly, found in a complex with CDC20, CDC27 and TUBG1. Interacts with CDC20. As to expression, expressed in testis. Expressed in pachyten spermatocytes, spermatids and epididymal sperm (at protein level).

It is found in the cytoplasm. The protein resides in the cytoskeleton. Its subcellular location is the microtubule organizing center. The protein localises to the centrosome. The protein is Speriolin (Spatc1) of Mus musculus (Mouse).